Reading from the N-terminus, the 361-residue chain is UPF0283 membrane protein Smed_1530 (361 aa).

The disordered stretch occupies residues 1–40 (MNDDSNGRRRRPAAFPVGTEDATSRELEQTPRRAPGSFSD). A compositionally biased stretch (basic and acidic residues) spans 22 to 31 (ATSRELEQTP). The next 2 membrane-spanning stretches (helical) occupy residues 76 to 96 (FGKIAAGAFGILISLAVGLWV) and 109 to 129 (WLGYGAVAVVAIGAAAFLIVV).

It belongs to the UPF0283 family.

Its subcellular location is the cell inner membrane. This chain is UPF0283 membrane protein Smed_1530, found in Sinorhizobium medicae (strain WSM419) (Ensifer medicae).